We begin with the raw amino-acid sequence, 674 residues long: Metal-nicotianamine transporter YSL2 (674 aa).

The interval 1–29 (MEAAAPEIERCDAGDVESDHDGAAAAAER) is disordered. The span at 7–22 (EIERCDAGDVESDHDG) shows a compositional bias: basic and acidic residues. Transmembrane regions (helical) follow at residues 41–61 (GMVA…KLAL), 64–84 (GIIP…LRGW), 118–138 (CAVA…LLAL), 162–182 (GVGW…LNLL), 224–244 (GFLN…FYTG), 283–303 (LVNL…WPLI), 329–349 (FMCV…VTGI), 392–412 (LAYA…PIMF), 420–440 (VVVA…GTGL), 452–472 (IALF…AGLV), 506–526 (VGQA…FLLF), 559–579 (SALP…SVLI), 604–624 (FLVG…VFAW), and 633–653 (ALLV…WMFP).

The protein belongs to the YSL (TC 2.A.67.2) family. As to expression, expressed in phloem cells of vascular bundles in leaves and leaf sheaths. Expressed at low levels in phloem companion cells in the central cylinder of roots, but not in the epidermal or cortical cells.

It localises to the cell membrane. Involved in the phloem transport of iron and manganese and their translocation into the grain. Transports iron- and manganese-nicotianamine chelates, but not iron-phytosiderophore. The chain is Metal-nicotianamine transporter YSL2 (YSL2) from Oryza sativa subsp. japonica (Rice).